The sequence spans 417 residues: Serine hydroxymethyltransferase (417 aa).

Position 54 is an N6-acetyllysine (lysine 54). (6S)-5,6,7,8-tetrahydrofolate-binding positions include leucine 121 and 125 to 127 (GHL). Lysine 229 is subject to N6-(pyridoxal phosphate)lysine. Lysine 250, lysine 285, and lysine 354 each carry N6-acetyllysine. 355–357 (SPF) serves as a coordination point for (6S)-5,6,7,8-tetrahydrofolate. An N6-acetyllysine modification is found at lysine 375.

This sequence belongs to the SHMT family. Homodimer. The cofactor is pyridoxal 5'-phosphate.

Its subcellular location is the cytoplasm. It catalyses the reaction (6R)-5,10-methylene-5,6,7,8-tetrahydrofolate + glycine + H2O = (6S)-5,6,7,8-tetrahydrofolate + L-serine. It functions in the pathway one-carbon metabolism; tetrahydrofolate interconversion. The protein operates within amino-acid biosynthesis; glycine biosynthesis; glycine from L-serine: step 1/1. Catalyzes the reversible interconversion of serine and glycine with tetrahydrofolate (THF) serving as the one-carbon carrier. This reaction serves as the major source of one-carbon groups required for the biosynthesis of purines, thymidylate, methionine, and other important biomolecules. Also exhibits THF-independent aldolase activity toward beta-hydroxyamino acids, producing glycine and aldehydes, via a retro-aldol mechanism. In Escherichia coli O157:H7, this protein is Serine hydroxymethyltransferase.